Consider the following 530-residue polypeptide: Probable histone-arginine methyltransferase CARMER (530 aa).

Residues 141-450 form the SAM-dependent MTase PRMT-type domain; sequence ASQYFQFYGY…QSYDVTIDLH (310 aa). The S-adenosyl-L-methionine site is built by glutamine 154, arginine 163, glycine 187, glutamate 209, glutamate 238, and threonine 266. Arginine 501 bears the Asymmetric dimethylarginine; by autocatalysis mark.

The protein belongs to the class I-like SAM-binding methyltransferase superfamily. Protein arginine N-methyltransferase family. Homodimer. Interacts with EcR. The dimethylated protein is the major form. Present ubiquitously (at protein level). Expressed in the imaginal disks and in larval brains, and to a much lesser degree in the polytene larval tissue such as salivary glands.

The protein resides in the cytoplasm. It is found in the nucleus. It carries out the reaction L-arginyl-[protein] + 2 S-adenosyl-L-methionine = N(omega),N(omega)-dimethyl-L-arginyl-[protein] + 2 S-adenosyl-L-homocysteine + 2 H(+). In terms of biological role, methylates (mono- and asymmetric dimethylation) the guanidino nitrogens of arginyl residues in proteins. May methylate histone H3 at 'Arg-17' and activate transcription via chromatin remodeling. Coordinates ecdysone-mediated expression of cell death genes. The polypeptide is Probable histone-arginine methyltransferase CARMER (Art4) (Drosophila melanogaster (Fruit fly)).